The chain runs to 339 residues: Fructose-1,6-bisphosphatase class 1 (339 aa).

Residues Glu101, Asp120, Leu122, and Asp123 each contribute to the Mg(2+) site. Substrate-binding positions include 123–126, Asn215, and Lys281; that span reads DGSS. Glu287 contributes to the Mg(2+) binding site.

This sequence belongs to the FBPase class 1 family. In terms of assembly, homotetramer. The cofactor is Mg(2+).

The protein resides in the cytoplasm. The catalysed reaction is beta-D-fructose 1,6-bisphosphate + H2O = beta-D-fructose 6-phosphate + phosphate. It functions in the pathway carbohydrate biosynthesis; gluconeogenesis. This Polynucleobacter necessarius subsp. necessarius (strain STIR1) protein is Fructose-1,6-bisphosphatase class 1.